The sequence spans 150 residues: Transcription antitermination protein NusB (150 aa).

This sequence belongs to the NusB family.

In terms of biological role, involved in transcription antitermination. Required for transcription of ribosomal RNA (rRNA) genes. Binds specifically to the boxA antiterminator sequence of the ribosomal RNA (rrn) operons. The protein is Transcription antitermination protein NusB of Streptococcus pyogenes serotype M3 (strain ATCC BAA-595 / MGAS315).